The primary structure comprises 106 residues: Nucleoid-associated protein Noc_2594 (106 aa).

Disordered regions lie at residues 1–20 (MKGG…SNME) and 85–106 (QSKE…KLPL). Residues 10–20 (KQAQQLQSNME) are compositionally biased toward polar residues.

The protein belongs to the YbaB/EbfC family. As to quaternary structure, homodimer.

The protein localises to the cytoplasm. It is found in the nucleoid. Functionally, binds to DNA and alters its conformation. May be involved in regulation of gene expression, nucleoid organization and DNA protection. The polypeptide is Nucleoid-associated protein Noc_2594 (Nitrosococcus oceani (strain ATCC 19707 / BCRC 17464 / JCM 30415 / NCIMB 11848 / C-107)).